Here is a 229-residue protein sequence, read N- to C-terminus: Coiled-coil domain-containing protein 134 (229 aa).

The first 22 residues, 1–22 (MDPVQLLSFLLALLLPLGTALD), serve as a signal peptide directing secretion. Residues 192–218 (NTDAFQKALREEEKRRRKEEKRKEIRK) adopt a coiled-coil conformation. The tract at residues 201–229 (REEEKRRRKEEKRKEIRKGPRITRSRSEL) is disordered. Residues 219–229 (GPRITRSRSEL) show a composition bias toward basic residues. The Prevents secretion from ER motif lies at 226 to 229 (RSEL).

This sequence belongs to the CCDC134 family.

The protein resides in the endoplasmic reticulum lumen. Its function is as follows. Molecular adapter required to prevent protein hyperglycosylation of HSP90B1: during translation, associates with nascent HSP90B1 and the STT3A catalytic component of the OST-A complex and tethers them to a specialized translocon that forms a microenvironment for HSP90B1 folding. In the CCDC134-containing translocon, STT3A associates with the SRT pseudosubstrate motif of HSP90B1, preventing access to facultative glycosylation sites until folding is completed, preventing hyperglycosylation and subsequent degradation of HSP90B1. In Xenopus tropicalis (Western clawed frog), this protein is Coiled-coil domain-containing protein 134 (ccdc134).